We begin with the raw amino-acid sequence, 104 residues long: Large ribosomal subunit protein uL24 (104 aa).

The protein belongs to the universal ribosomal protein uL24 family. In terms of assembly, part of the 50S ribosomal subunit.

Its function is as follows. One of two assembly initiator proteins, it binds directly to the 5'-end of the 23S rRNA, where it nucleates assembly of the 50S subunit. In terms of biological role, one of the proteins that surrounds the polypeptide exit tunnel on the outside of the subunit. The sequence is that of Large ribosomal subunit protein uL24 from Treponema denticola (strain ATCC 35405 / DSM 14222 / CIP 103919 / JCM 8153 / KCTC 15104).